Reading from the N-terminus, the 1073-residue chain is Serine/threonine-protein phosphatase 6 regulatory ankyrin repeat subunit C (1073 aa).

ANK repeat units lie at residues 7 to 36 (TDQP…NINV), 40 to 69 (ERRT…NVNA), 73 to 102 (VWLT…DVNA), 106 to 135 (YWQT…TVNV), 139 to 168 (TGRT…SLST), 172 to 201 (KDRQ…DVMC), 205 to 234 (KGYT…EIDE), 238 to 267 (FGNT…NVNQ), 271 to 301 (KGFT…DVNF), 305 to 334 (EGKS…EIDC), 338 to 367 (YGNT…DTAR), 371 to 400 (HDMF…LYSI), 422 to 451 (LGRT…DLRR), 455 to 484 (FGRT…SINE), 488 to 544 (KGCT…DPSL), 548 to 578 (QGYT…CLED), 583 to 612 (IPVS…NLDV), 616 to 645 (KGRT…SALV), 650 to 679 (RKWT…RADI), 686 to 715 (HGQT…TADA), 719 to 748 (RGRT…FVLC), 752 to 781 (KGRT…STDP), 789 to 818 (SGYS…FAYL), 821 to 851 (NPFT…KIVN), 856 to 885 (KGRT…EVDT), 889 to 919 (LGRT…NITV), 923 to 952 (NKNT…DLGL), and 959 to 988 (ALQM…TVLA).

As to quaternary structure, protein phosphatase 6 (PP6) holoenzyme is proposed to be a heterotrimeric complex formed by the catalytic subunit, a SAPS domain-containing subunit (PP6R) and an ankyrin repeat-domain containing regulatory subunit (ARS).

In terms of biological role, putative regulatory subunit of protein phosphatase 6 (PP6) that may be involved in the recognition of phosphoprotein substrates. The protein is Serine/threonine-protein phosphatase 6 regulatory ankyrin repeat subunit C (ANKRD52) of Gallus gallus (Chicken).